Here is a 209-residue protein sequence, read N- to C-terminus: Octanoyltransferase (209 aa).

The 180-residue stretch at 30 to 209 (DNEPEIVYLV…IQTEFNKIFK (180 aa)) folds into the BPL/LPL catalytic domain. Residues 69-76 (RGGKFTFH), 143-145 (AIG), and 156-158 (GVA) contribute to the substrate site. Cys-174 acts as the Acyl-thioester intermediate in catalysis.

It belongs to the LipB family.

Its subcellular location is the cytoplasm. It carries out the reaction octanoyl-[ACP] + L-lysyl-[protein] = N(6)-octanoyl-L-lysyl-[protein] + holo-[ACP] + H(+). It participates in protein modification; protein lipoylation via endogenous pathway; protein N(6)-(lipoyl)lysine from octanoyl-[acyl-carrier-protein]: step 1/2. In terms of biological role, catalyzes the transfer of endogenously produced octanoic acid from octanoyl-acyl-carrier-protein onto the lipoyl domains of lipoate-dependent enzymes. Lipoyl-ACP can also act as a substrate although octanoyl-ACP is likely to be the physiological substrate. In Rickettsia felis (strain ATCC VR-1525 / URRWXCal2) (Rickettsia azadi), this protein is Octanoyltransferase.